A 296-amino-acid polypeptide reads, in one-letter code: Protoheme IX farnesyltransferase (296 aa).

The next 9 helical transmembrane spans lie at 8–28 (VTKP…FLLA), 35–55 (YPLF…GCVF), 84–104 (VSLV…YIGA), 107–127 (LAMW…SLYM), 132–152 (VYGT…GYCA), 162–182 (LILL…IAIF), 208–228 (ITVY…GGYA), 229–249 (GYKY…MALR), and 263–283 (LFVF…IDFS).

Belongs to the UbiA prenyltransferase family. Protoheme IX farnesyltransferase subfamily.

It is found in the cell inner membrane. It carries out the reaction heme b + (2E,6E)-farnesyl diphosphate + H2O = Fe(II)-heme o + diphosphate. Its pathway is porphyrin-containing compound metabolism; heme O biosynthesis; heme O from protoheme: step 1/1. In terms of biological role, converts heme B (protoheme IX) to heme O by substitution of the vinyl group on carbon 2 of heme B porphyrin ring with a hydroxyethyl farnesyl side group. This Serratia proteamaculans (strain 568) protein is Protoheme IX farnesyltransferase.